A 485-amino-acid polypeptide reads, in one-letter code: UDP-N-acetylmuramoyl-L-alanyl-D-glutamate--2,6-diaminopimelate ligase (485 aa).

Ser30 lines the UDP-N-acetyl-alpha-D-muramoyl-L-alanyl-D-glutamate pocket. 111–117 is a binding site for ATP; the sequence is GTNGKTT. UDP-N-acetyl-alpha-D-muramoyl-L-alanyl-D-glutamate-binding positions include 153 to 154, Ser180, Gln186, and Arg188; that span reads TT. N6-carboxylysine is present on Lys220. Meso-2,6-diaminopimelate-binding positions include Arg378, 402-405, Gly455, and Glu459; that span reads DNPR. A Meso-diaminopimelate recognition motif motif is present at residues 402-405; that stretch reads DNPR.

Belongs to the MurCDEF family. MurE subfamily. Mg(2+) serves as cofactor. Post-translationally, carboxylation is probably crucial for Mg(2+) binding and, consequently, for the gamma-phosphate positioning of ATP.

It localises to the cytoplasm. It catalyses the reaction UDP-N-acetyl-alpha-D-muramoyl-L-alanyl-D-glutamate + meso-2,6-diaminopimelate + ATP = UDP-N-acetyl-alpha-D-muramoyl-L-alanyl-gamma-D-glutamyl-meso-2,6-diaminopimelate + ADP + phosphate + H(+). It functions in the pathway cell wall biogenesis; peptidoglycan biosynthesis. Catalyzes the addition of meso-diaminopimelic acid to the nucleotide precursor UDP-N-acetylmuramoyl-L-alanyl-D-glutamate (UMAG) in the biosynthesis of bacterial cell-wall peptidoglycan. The protein is UDP-N-acetylmuramoyl-L-alanyl-D-glutamate--2,6-diaminopimelate ligase of Bacteroides fragilis (strain ATCC 25285 / DSM 2151 / CCUG 4856 / JCM 11019 / LMG 10263 / NCTC 9343 / Onslow / VPI 2553 / EN-2).